Consider the following 214-residue polypeptide: Glycerol-3-phosphate acyltransferase (214 aa).

The next 5 helical transmembrane spans lie at 4–24 (LIVAVVAYLIGSVSFAVIVSA), 52–72 (AAILTLIGDAFKGWLPVWFVV), 82–102 (ETSVAIASVAVFLGHLYPVFF), 118–138 (LAINPILGVATLLTWLIVAFF), and 159–179 (FLFGPHVIALAIVVMSSLLVW).

Belongs to the PlsY family. As to quaternary structure, probably interacts with PlsX.

Its subcellular location is the cell inner membrane. It catalyses the reaction an acyl phosphate + sn-glycerol 3-phosphate = a 1-acyl-sn-glycero-3-phosphate + phosphate. It participates in lipid metabolism; phospholipid metabolism. Catalyzes the transfer of an acyl group from acyl-phosphate (acyl-PO(4)) to glycerol-3-phosphate (G3P) to form lysophosphatidic acid (LPA). This enzyme utilizes acyl-phosphate as fatty acyl donor, but not acyl-CoA or acyl-ACP. This is Glycerol-3-phosphate acyltransferase from Paraburkholderia phytofirmans (strain DSM 17436 / LMG 22146 / PsJN) (Burkholderia phytofirmans).